A 356-amino-acid chain; its full sequence is uncharacterized protein (356 aa).

37–44 is an NADP(+) binding site; it reads TGASSGIG. Ser168 contacts substrate. Tyr181 acts as the Proton acceptor in catalysis.

It belongs to the short-chain dehydrogenases/reductases (SDR) family.

This is an uncharacterized protein from Bacillus subtilis (strain 168).